A 330-amino-acid polypeptide reads, in one-letter code: Stimulated by retinoic acid gene 8 protein homolog (330 aa).

The Nuclear localization signal (NLS) signature appears at 50–55 (RVARRR). Positions 88-112 (QVLNKAKSHIPELEQTLDNLLKLKA) form a coiled coil.

As to quaternary structure, interacts with XPO1. Interacts with MEIOSIN. Phosphorylated. In terms of tissue distribution, expressed specifically in testis and fetal ovaries.

Its subcellular location is the cytoplasm. It is found in the nucleus. In terms of biological role, meiosis-inducer required for the transition into meiosis for both female and male germ cells. In female germ cells, acts downstream of ZGLP1 as a key effector of the meiotic program: required for premeiotic DNA replication and subsequent events in meiotic prophase. During spermatogenesis, next to its role in meiotic initiation, promotes (but is not required for) spermatogonial differentiation. In complex with MEIOSIN, directly activates the transcription of a subset of critical meiotic genes playing a central role in cell-cycle switching from mitosis to meiosis. The protein is Stimulated by retinoic acid gene 8 protein homolog of Homo sapiens (Human).